The chain runs to 459 residues: Argininosuccinate lyase (459 aa).

This sequence belongs to the lyase 1 family. Argininosuccinate lyase subfamily.

It localises to the cytoplasm. It carries out the reaction 2-(N(omega)-L-arginino)succinate = fumarate + L-arginine. Its pathway is amino-acid biosynthesis; L-arginine biosynthesis; L-arginine from L-ornithine and carbamoyl phosphate: step 3/3. In Prochlorococcus marinus (strain MIT 9215), this protein is Argininosuccinate lyase.